The sequence spans 269 residues: 4-hydroxy-tetrahydrodipicolinate reductase (269 aa).

NAD(+) is bound by residues G11 to M16 and E37. R38 lines the NADP(+) pocket. NAD(+) contacts are provided by residues G101 to T103 and A125 to M128. H158 (proton donor/acceptor) is an active-site residue. Residue H159 coordinates (S)-2,3,4,5-tetrahydrodipicolinate. Catalysis depends on K162, which acts as the Proton donor. G168 to T169 is a binding site for (S)-2,3,4,5-tetrahydrodipicolinate.

The protein belongs to the DapB family.

Its subcellular location is the cytoplasm. It catalyses the reaction (S)-2,3,4,5-tetrahydrodipicolinate + NAD(+) + H2O = (2S,4S)-4-hydroxy-2,3,4,5-tetrahydrodipicolinate + NADH + H(+). It carries out the reaction (S)-2,3,4,5-tetrahydrodipicolinate + NADP(+) + H2O = (2S,4S)-4-hydroxy-2,3,4,5-tetrahydrodipicolinate + NADPH + H(+). The protein operates within amino-acid biosynthesis; L-lysine biosynthesis via DAP pathway; (S)-tetrahydrodipicolinate from L-aspartate: step 4/4. Functionally, catalyzes the conversion of 4-hydroxy-tetrahydrodipicolinate (HTPA) to tetrahydrodipicolinate. The polypeptide is 4-hydroxy-tetrahydrodipicolinate reductase (Cereibacter sphaeroides (strain ATCC 17029 / ATH 2.4.9) (Rhodobacter sphaeroides)).